The chain runs to 318 residues: Type II restriction enzyme HaeIII (318 aa).

The enzyme catalyses Endonucleolytic cleavage of DNA to give specific double-stranded fragments with terminal 5'-phosphates.. Its function is as follows. A P subtype restriction enzyme that recognizes the double-stranded sequence 5'-GGCC-3' and cleaves after G-2. This chain is Type II restriction enzyme HaeIII (haeIIIR), found in Haemophilus aegyptius.